The chain runs to 99 residues: Acylphosphatase (99 aa).

Residues 5–97 (VRQIVIRGRV…RPGERFSQLP (93 aa)) enclose the Acylphosphatase-like domain. Catalysis depends on residues Arg20 and Asn38.

It belongs to the acylphosphatase family.

The enzyme catalyses an acyl phosphate + H2O = a carboxylate + phosphate + H(+). The polypeptide is Acylphosphatase (acyP) (Nitrobacter hamburgensis (strain DSM 10229 / NCIMB 13809 / X14)).